Consider the following 330-residue polypeptide: DNA primase small subunit PriS (330 aa).

Residues D101 and D103 contribute to the active site. Positions 116, 119, 128, and 131 each coordinate Zn(2+). The active site involves D235.

Belongs to the eukaryotic-type primase small subunit family. Heterodimer of a small subunit (PriS) and a large subunit (PriL). It depends on Mg(2+) as a cofactor. Mn(2+) serves as cofactor.

Functionally, catalytic subunit of DNA primase, an RNA polymerase that catalyzes the synthesis of short RNA molecules used as primers for DNA polymerase during DNA replication. The small subunit contains the primase catalytic core and has DNA synthesis activity on its own. Binding to the large subunit stabilizes and modulates the activity, increasing the rate of DNA synthesis while decreasing the length of the DNA fragments, and conferring RNA synthesis capability. The DNA polymerase activity may enable DNA primase to also catalyze primer extension after primer synthesis. May also play a role in DNA repair. The chain is DNA primase small subunit PriS from Saccharolobus islandicus (strain M.16.27) (Sulfolobus islandicus).